Here is a 435-residue protein sequence, read N- to C-terminus: Aspartate aminotransferase (435 aa).

Residues Tyr-69 and 100–101 contribute to the pyridoxal 5'-phosphate site; that span reads SL. 139–141 serves as a coordination point for substrate; it reads YDR. Residues Asn-189, Tyr-221, and 254–256 contribute to the pyridoxal 5'-phosphate site; that span reads STS. Arg-392 is a substrate binding site.

This sequence belongs to the class-I pyridoxal-phosphate-dependent aminotransferase family. Requires pyridoxal 5'-phosphate as cofactor.

The enzyme catalyses L-aspartate + 2-oxoglutarate = oxaloacetate + L-glutamate. In terms of biological role, main aspartate aminotransferase that couples nitrogen assimilation to aspartate synthesis. Has a weak, but significant, side activity toward kynurenine (Kyn). Oxaloacetate and 2-oxoglutarate, but not pyruvate, serve as amino acceptors, while Asp, Glu and Kyn serve as the best amino donors. Essential for axenic growth and survival of M.tuberculosis in macrophages and in mice. The protein is Aspartate aminotransferase of Mycobacterium tuberculosis (strain ATCC 25618 / H37Rv).